Here is a 264-residue protein sequence, read N- to C-terminus: Protein GrpE (264 aa).

Over residues 36–49 (KVQSKKVSSDHSSS) the composition is skewed to basic and acidic residues. The tract at residues 36-59 (KVQSKKVSSDHSSSEDNASSDINS) is disordered. Positions 50-59 (EDNASSDINS) are enriched in low complexity.

Belongs to the GrpE family. Homodimer.

The protein localises to the cytoplasm. In terms of biological role, participates actively in the response to hyperosmotic and heat shock by preventing the aggregation of stress-denatured proteins, in association with DnaK and GrpE. It is the nucleotide exchange factor for DnaK and may function as a thermosensor. Unfolded proteins bind initially to DnaJ; upon interaction with the DnaJ-bound protein, DnaK hydrolyzes its bound ATP, resulting in the formation of a stable complex. GrpE releases ADP from DnaK; ATP binding to DnaK triggers the release of the substrate protein, thus completing the reaction cycle. Several rounds of ATP-dependent interactions between DnaJ, DnaK and GrpE are required for fully efficient folding. This chain is Protein GrpE, found in Peanut witches'-broom phytoplasma.